The primary structure comprises 226 residues: Ribonuclease 3 (226 aa).

In terms of domain architecture, RNase III spans 6–128 (ANKIQQILGY…LIGSIYLDSN (123 aa)). A Mg(2+)-binding site is contributed by Glu41. Residue Asp45 is part of the active site. 2 residues coordinate Mg(2+): Asn114 and Glu117. Residue Glu117 is part of the active site. A DRBM domain is found at 155–225 (DPKTRLQEYL…ARKALIKLGV (71 aa)).

Belongs to the ribonuclease III family. Homodimer. Mg(2+) serves as cofactor.

It localises to the cytoplasm. It carries out the reaction Endonucleolytic cleavage to 5'-phosphomonoester.. Functionally, digests double-stranded RNA. Involved in the processing of primary rRNA transcript to yield the immediate precursors to the large and small rRNAs (23S and 16S). Processes some mRNAs, and tRNAs when they are encoded in the rRNA operon. Processes pre-crRNA and tracrRNA of type II CRISPR loci if present in the organism. This Buchnera aphidicola subsp. Schizaphis graminum (strain Sg) protein is Ribonuclease 3.